A 428-amino-acid polypeptide reads, in one-letter code: UDP-N-acetylglucosamine 1-carboxyvinyltransferase 2 (428 aa).

22–23 (KN) provides a ligand contact to phosphoenolpyruvate. Arg92 contributes to the UDP-N-acetyl-alpha-D-glucosamine binding site. Cys116 serves as the catalytic Proton donor. 2-(S-cysteinyl)pyruvic acid O-phosphothioketal is present on Cys116. Residues 121 to 125 (RPIDQ), Asp304, and Ile326 each bind UDP-N-acetyl-alpha-D-glucosamine.

This sequence belongs to the EPSP synthase family. MurA subfamily.

It is found in the cytoplasm. The enzyme catalyses phosphoenolpyruvate + UDP-N-acetyl-alpha-D-glucosamine = UDP-N-acetyl-3-O-(1-carboxyvinyl)-alpha-D-glucosamine + phosphate. It functions in the pathway cell wall biogenesis; peptidoglycan biosynthesis. Functionally, cell wall formation. Adds enolpyruvyl to UDP-N-acetylglucosamine. This chain is UDP-N-acetylglucosamine 1-carboxyvinyltransferase 2, found in Shouchella clausii (strain KSM-K16) (Alkalihalobacillus clausii).